The following is a 48-amino-acid chain: Small, acid-soluble spore protein O (48 aa).

Residues 1–23 (MTKRKANHVINGMNAAKSQGNGA) form a disordered region.

Belongs to the SspO family.

The protein resides in the spore core. The protein is Small, acid-soluble spore protein O of Bacillus pumilus (strain SAFR-032).